The sequence spans 60 residues: Large ribosomal subunit protein bL32 (60 aa).

The span at 1 to 20 (MAVQKSRKSRSRRDMRRSHH) shows a compositional bias: basic residues. Residues 1 to 22 (MAVQKSRKSRSRRDMRRSHHRM) are disordered.

This sequence belongs to the bacterial ribosomal protein bL32 family.

The sequence is that of Large ribosomal subunit protein bL32 from Psychrobacter arcticus (strain DSM 17307 / VKM B-2377 / 273-4).